The sequence spans 231 residues: PX domain-containing protein 1 (231 aa).

The 134-residue stretch at 1-134 (MASAVFEGTS…TFFERSPLDQ (134 aa)) folds into the PX domain.

The sequence is that of PX domain-containing protein 1 (PXDC1) from Homo sapiens (Human).